The sequence spans 380 residues: Cytochrome b (380 aa).

A run of 4 helical transmembrane segments spans residues 33-53 (FGSL…FLAM), 77-98 (WMIR…FLHI), 113-133 (WNIG…GYVL), and 178-198 (FFTL…LHLL). Residues histidine 83 and histidine 97 each coordinate heme b. Heme b-binding residues include histidine 182 and histidine 196. Histidine 201 is a binding site for a ubiquinone. 4 helical membrane-spanning segments follow: residues 226–246 (IKDI…TLLS), 288–308 (LGGV…PALH), 320–340 (LSQF…WIGG), and 347–367 (FITI…LLMP).

It belongs to the cytochrome b family. As to quaternary structure, the cytochrome bc1 complex contains 11 subunits: 3 respiratory subunits (MT-CYB, CYC1 and UQCRFS1), 2 core proteins (UQCRC1 and UQCRC2) and 6 low-molecular weight proteins (UQCRH/QCR6, UQCRB/QCR7, UQCRQ/QCR8, UQCR10/QCR9, UQCR11/QCR10 and a cleavage product of UQCRFS1). This cytochrome bc1 complex then forms a dimer. Heme b is required as a cofactor.

The protein resides in the mitochondrion inner membrane. In terms of biological role, component of the ubiquinol-cytochrome c reductase complex (complex III or cytochrome b-c1 complex) that is part of the mitochondrial respiratory chain. The b-c1 complex mediates electron transfer from ubiquinol to cytochrome c. Contributes to the generation of a proton gradient across the mitochondrial membrane that is then used for ATP synthesis. The polypeptide is Cytochrome b (MT-CYB) (Pongo abelii (Sumatran orangutan)).